Reading from the N-terminus, the 291-residue chain is Acetyl-coenzyme A carboxylase carboxyl transferase subunit beta (291 aa).

In terms of domain architecture, CoA carboxyltransferase N-terminal spans 29 to 291 (LWSKCPECGE…MHQQPAAVSA (263 aa)). 4 residues coordinate Zn(2+): Cys-33, Cys-36, Cys-52, and Cys-55. The C4-type zinc-finger motif lies at 33-55 (CPECGEVVYRKDLIANASVCASC).

This sequence belongs to the AccD/PCCB family. As to quaternary structure, acetyl-CoA carboxylase is a heterohexamer composed of biotin carboxyl carrier protein (AccB), biotin carboxylase (AccC) and two subunits each of ACCase subunit alpha (AccA) and ACCase subunit beta (AccD). Zn(2+) serves as cofactor.

It is found in the cytoplasm. It catalyses the reaction N(6)-carboxybiotinyl-L-lysyl-[protein] + acetyl-CoA = N(6)-biotinyl-L-lysyl-[protein] + malonyl-CoA. The protein operates within lipid metabolism; malonyl-CoA biosynthesis; malonyl-CoA from acetyl-CoA: step 1/1. In terms of biological role, component of the acetyl coenzyme A carboxylase (ACC) complex. Biotin carboxylase (BC) catalyzes the carboxylation of biotin on its carrier protein (BCCP) and then the CO(2) group is transferred by the transcarboxylase to acetyl-CoA to form malonyl-CoA. The polypeptide is Acetyl-coenzyme A carboxylase carboxyl transferase subunit beta (Synechococcus sp. (strain RCC307)).